The chain runs to 154 residues: Probable cyclic pyranopterin monophosphate synthase (154 aa).

Substrate contacts are provided by residues leucine 74 to histidine 76 and methionine 110 to glutamate 111. Aspartate 125 is an active-site residue.

It belongs to the MoaC family. Homohexamer; trimer of dimers.

It catalyses the reaction (8S)-3',8-cyclo-7,8-dihydroguanosine 5'-triphosphate = cyclic pyranopterin phosphate + diphosphate. It participates in cofactor biosynthesis; molybdopterin biosynthesis. Its function is as follows. Catalyzes the conversion of (8S)-3',8-cyclo-7,8-dihydroguanosine 5'-triphosphate to cyclic pyranopterin monophosphate (cPMP). The sequence is that of Probable cyclic pyranopterin monophosphate synthase from Methanosphaerula palustris (strain ATCC BAA-1556 / DSM 19958 / E1-9c).